Consider the following 504-residue polypeptide: Zinc finger protein AEBP2 (504 aa).

Positions 1–219 are disordered; that stretch reads MAAALADMAD…SRMDSEDSIS (219 aa). Ala2 is subject to N-acetylalanine. A compositionally biased stretch (low complexity) spans 16-30; sequence RLSPLSPGSPGPAAR. Phosphoserine is present on residues Ser18, Ser21, and Ser24. A compositionally biased stretch (acidic residues) spans 36 to 49; it reads PEEEEEEDDEEAEA. The segment covering 59-69 has biased composition (gly residues); the sequence is GGAGGGAGGGE. Positions 86 to 110 are enriched in acidic residues; sequence GDEDEDEEDDEDEGSSSGGAEEESS. Positions 129-140 are enriched in low complexity; it reads SLSPGAASSSSG. Ser131 carries the post-translational modification Phosphoserine. Residues 142-153 are compositionally biased toward basic and acidic residues; it reads GDGKEGLEEPKG. Composition is skewed to gly residues over residues 154–168 and 178–189; these read PRGGPGGPGSSGGGS and GDEGYGTGGGGS. Ser199, Ser203, and Ser204 each carry phosphoserine. Residues 202 to 287 are interaction with RBBP4; sequence MSSDGEPLSR…IHVDGQRGGV (86 aa). A C2H2-type 1 zinc finger spans residues 254-279; it reads YNCCWDQCQACFNSSPDLADHIRSIH. A C2H2-type 2; degenerate zinc finger spans residues 293-315; that stretch reads KGCKVYNTPSTSQSWLQRHMLTH. A C2H2-type 3 zinc finger spans residues 321–345; the sequence is FKCVVGGCNASFASQGGLARHVPTH. Positions 345–358 are enriched in polar residues; it reads HFSQQNSSKVSSQP. The interval 345-387 is disordered; that stretch reads HFSQQNSSKVSSQPKAKEESPSKAGMNKRRKLKNKRRRSLPRP. The segment covering 370 to 385 has biased composition (basic residues); that stretch reads MNKRRKLKNKRRRSLP. Phosphoserine is present on Ser383. Residues 400–471 form an interaction with SUZ12 region; the sequence is RHRAICFNLS…QLKTKVVHLS (72 aa). An important for nucleosome binding activity of the PRC2 complex region spans residues 488–504; sequence TMPQKRLKRFDILNFPR.

The protein belongs to the AEBP2/jing C2H2-type zinc-finger family. Self-associates. Associates with the PRC2 complex, which consists of the core components EED, EZH1 or EZH2, SUZ12, and RBBP4, and various combinations of accessory subunits including AEBP2, JARID2, PHF19, MTF2 and EPOP. Found in a monomeric PRC2.2 (class 2) complex consisting of at least SUZ12, RBBP4, AEBP2 and JARID2. Within the PRC2 complex, interacts directly with SUZ12; competes with PHF19 for SUZ12 binding. Interacts with EED, EZH2, and RBBP4. May also interact with RBBP7. Expressed in brain, brown adipose tissue, white adipose tissue, heart, kidney, lung, skeletal muscle, small intestine and spleen. Expressed at low levels in liver.

Its subcellular location is the nucleus. In terms of biological role, acts as an accessory subunit for the core Polycomb repressive complex 2 (PRC2), which mediates histone H3K27 (H3K27me3) trimethylation on chromatin leading to transcriptional repression of the affected target gene. Plays a role in nucleosome localization of the PRC2 complex. This chain is Zinc finger protein AEBP2 (Aebp2), found in Mus musculus (Mouse).